Here is a 412-residue protein sequence, read N- to C-terminus: Tryptophan 2,3-dioxygenase (412 aa).

Residues 79 to 83 (FIVVH), tyrosine 146, and arginine 150 each bind substrate. Histidine 346 is a binding site for heme. Threonine 360 is a binding site for substrate.

The protein belongs to the tryptophan 2,3-dioxygenase family. Homotetramer. Heme is required as a cofactor.

The catalysed reaction is L-tryptophan + O2 = N-formyl-L-kynurenine. It functions in the pathway amino-acid degradation; L-tryptophan degradation via kynurenine pathway; L-kynurenine from L-tryptophan: step 1/2. Heme-dependent dioxygenase that catalyzes the oxidative cleavage of the L-tryptophan (L-Trp) pyrrole ring and converts L-tryptophan to N-formyl-L-kynurenine. Catalyzes the oxidative cleavage of the indole moiety. This chain is Tryptophan 2,3-dioxygenase, found in Sorangium cellulosum (strain So ce56) (Polyangium cellulosum (strain So ce56)).